The primary structure comprises 409 residues: Odorant receptor 35a (409 aa).

At Met-1–Ser-35 the chain is on the cytoplasmic side. The helical transmembrane segment at Thr-36–Met-56 threads the bilayer. Topologically, residues Gln-57 to Arg-64 are extracellular. A helical membrane pass occupies residues Tyr-65–Tyr-85. The Cytoplasmic portion of the chain corresponds to Leu-86 to Leu-139. A helical membrane pass occupies residues Val-140–Ile-160. N-linked (GlcNAc...) asparagine glycosylation occurs at Asn-161. The Extracellular segment spans residues Asn-161–Asp-177. The helical transmembrane segment at Pro-178–Thr-198 threads the bilayer. The Cytoplasmic segment spans residues Met-199–Arg-273. A helical transmembrane segment spans residues Val-274–Thr-294. Topologically, residues Asn-295–Tyr-302 are extracellular. Residues Ala-303 to Leu-323 traverse the membrane as a helical segment. At Ala-324–Arg-379 the chain is on the cytoplasmic side. A helical membrane pass occupies residues Val-380–Thr-400. At Ser-401 to Asn-409 the chain is on the extracellular side.

It belongs to the insect chemoreceptor superfamily. Heteromeric odorant receptor channel (TC 1.A.69) family. Or1a subfamily. As to quaternary structure, interacts with Orco. Complexes exist early in the endomembrane system in olfactory sensory neurons (OSNs), coupling these complexes to the conserved ciliary trafficking pathway. Expressed in ac3B olfactory sensory neurons in the antenna.

It localises to the cell membrane. In terms of biological role, odorant receptor which mediates acceptance or avoidance behavior, depending on its substrates. The odorant receptor repertoire encodes a large collection of odor stimuli that vary widely in identity, intensity, and duration. Forms a complex with Orco to form odorant-sensing units, providing sensitive and prolonged odorant signaling and calcium permeability. Involved in the behavioral responses to esters. Involved in the behavioral responses to butanol, pentanol, hexanol, octanol, propyl acetate, and butyl acetate. This Drosophila melanogaster (Fruit fly) protein is Odorant receptor 35a (Or35a).